The chain runs to 186 residues: UPF0200 protein Hbut_0338 (186 aa).

Residue 13 to 20 (GMPGSGKS) participates in ATP binding.

It belongs to the UPF0200 family.

This is UPF0200 protein Hbut_0338 from Hyperthermus butylicus (strain DSM 5456 / JCM 9403 / PLM1-5).